Consider the following 206-residue polypeptide: Homoserine/homoserine lactone efflux protein (206 aa).

6 helical membrane passes run 5–25, 45–65, 68–88, 117–137, 148–168, and 182–202; these read WWFA…SGAI, GLQT…GTLF, SVIA…WLGI, FVNL…PQFI, IVLG…YATL, and MKAL…LLAS.

The protein belongs to the Rht family.

It localises to the cell membrane. Its function is as follows. Conducts the efflux of homoserine and homoserine lactone. In Escherichia coli O157:H7, this protein is Homoserine/homoserine lactone efflux protein (rhtB).